The following is a 423-amino-acid chain: LysM domain-containing GPI-anchored protein 3 (423 aa).

Positions 1–24 are cleaved as a signal peptide; sequence MKNPEKPLLLFLILASSLASMATA. Intrachain disulfides connect Cys31–Cys97, Cys37–Cys160, Cys95–Cys158, and Cys97–Cys160. Positions 107-154 constitute a LysM 1 domain; the sequence is THYKTRTSDTLGSIADSVYGGLVSPEQIQVANSETDLSVLDVGTKLVI. Asn162 carries N-linked (GlcNAc...) asparagine glycosylation. Residues 173–216 enclose the LysM 2 domain; the sequence is LSYVVRGIDTMAGIAKRFSTSVTDLTNVNAMGAPDINPGDILAV. 2 disulfides stabilise this stretch: Cys221/Cys253 and Cys248/Cys276. Asn238 carries an N-linked (GlcNAc...) asparagine glycan. An N-linked (GlcNAc...) asparagine glycan is attached at Asn285. The GPI-anchor amidated glycine moiety is linked to residue Gly394. The propeptide at 395 to 423 is removed in mature form; sequence GSISIASCPLSYYSFIALLIPIGSCFFVF.

As to quaternary structure, interacts with peptidoglycans.

It localises to the cell membrane. Functionally, required as a cell surface receptor for peptidoglycan (PGN) elicitor signaling leading to innate immunity. Plays an essential role in detecting PGNs and restricting bacterial growth (of Pseudomonas syringae pv. tomato DC3000 for example). The protein is LysM domain-containing GPI-anchored protein 3 (LYM3) of Arabidopsis thaliana (Mouse-ear cress).